We begin with the raw amino-acid sequence, 171 residues long: Crossover junction endodeoxyribonuclease RuvC (171 aa).

Catalysis depends on residues Asp7, Glu66, and Asp138. Mg(2+)-binding residues include Asp7, Glu66, and Asp138.

Belongs to the RuvC family. In terms of assembly, homodimer which binds Holliday junction (HJ) DNA. The HJ becomes 2-fold symmetrical on binding to RuvC with unstacked arms; it has a different conformation from HJ DNA in complex with RuvA. In the full resolvosome a probable DNA-RuvA(4)-RuvB(12)-RuvC(2) complex forms which resolves the HJ. Mg(2+) serves as cofactor.

The protein resides in the cytoplasm. The enzyme catalyses Endonucleolytic cleavage at a junction such as a reciprocal single-stranded crossover between two homologous DNA duplexes (Holliday junction).. Functionally, the RuvA-RuvB-RuvC complex processes Holliday junction (HJ) DNA during genetic recombination and DNA repair. Endonuclease that resolves HJ intermediates. Cleaves cruciform DNA by making single-stranded nicks across the HJ at symmetrical positions within the homologous arms, yielding a 5'-phosphate and a 3'-hydroxyl group; requires a central core of homology in the junction. The consensus cleavage sequence is 5'-(A/T)TT(C/G)-3'. Cleavage occurs on the 3'-side of the TT dinucleotide at the point of strand exchange. HJ branch migration catalyzed by RuvA-RuvB allows RuvC to scan DNA until it finds its consensus sequence, where it cleaves and resolves the cruciform DNA. This chain is Crossover junction endodeoxyribonuclease RuvC, found in Thiobacillus denitrificans (strain ATCC 25259 / T1).